A 699-amino-acid polypeptide reads, in one-letter code: MARKTPLNRYRNIGICAHVDAGKTTTTERILFYTGVSHKIGEVHDGAATMDWMEQEQERGITITSAATTTFWQGMDQQYDQHRINIIDTPGHVDFTIEVERSLRVLDGAVVVFCGSSGVEPQSETVWRQANKYEVPRIVFVNKMDRAGADFDSVCNQIRKRLGASVVPIQYNIGAEDNFKGVVDLIRMKAIFWNEEDMGMTYEEKDIPDDIKDRCDELREQMTEAAAEGSEELMEKYLEEGDLSNDEIKAGLRQQVLANEIVLGLCGSAFKNKGVQALLDAVIEFLPAPDEVKAIQGVLPDGETVEARKSSDDEPFSALAFKIATDPFVGSLTFIRVYSGVLNSGDSVLNSVREKKERVGRLLQMHANSREEIKEVLAGDIAACVGMKDVTTGDTLCDLKNPIVLERMEFPEPVISVAVEPKSKADQEKMGLALGRLAQEDPSFRVKTDEETGQTIISGMGELHLDILVDRMRREFKVEANIGAPQVAYRETFTRGADVDGKFVKQSGGRGQYGHVKVKFEPIDRDEEFQFEEQIHGGSVPKEYFGAVQKGIDEQLQAGVLAGYPILGVKATLYDGSYHEVDSNENAFRMAGALAVKNAAKEAGAVLLEPIMKVEAVTPEDYMGDVMGDLNRRRGIVQGMEDTMAGKIIRAEVPLSEMFGYATDLRSMSQGRASYSMEFLKYAEAPKNIADEVISGKKS.

The 283-residue stretch at 8–290 folds into the tr-type G domain; it reads NRYRNIGICA…AVIEFLPAPD (283 aa). GTP contacts are provided by residues 17–24, 88–92, and 142–145; these read AHVDAGKT, DTPGH, and NKMD.

This sequence belongs to the TRAFAC class translation factor GTPase superfamily. Classic translation factor GTPase family. EF-G/EF-2 subfamily.

Its subcellular location is the cytoplasm. Catalyzes the GTP-dependent ribosomal translocation step during translation elongation. During this step, the ribosome changes from the pre-translocational (PRE) to the post-translocational (POST) state as the newly formed A-site-bound peptidyl-tRNA and P-site-bound deacylated tRNA move to the P and E sites, respectively. Catalyzes the coordinated movement of the two tRNA molecules, the mRNA and conformational changes in the ribosome. The chain is Elongation factor G from Alcanivorax borkumensis (strain ATCC 700651 / DSM 11573 / NCIMB 13689 / SK2).